The primary structure comprises 350 residues: Probable dual-specificity RNA methyltransferase RlmN (350 aa).

Glu93 acts as the Proton acceptor in catalysis. Residues Ser99–Gln327 enclose the Radical SAM core domain. Cys106 and Cys332 are joined by a disulfide. [4Fe-4S] cluster is bound by residues Cys113, Cys117, and Cys120. S-adenosyl-L-methionine is bound by residues Gly160 to Glu161, Ser190, Ser213 to His215, and Asn289. The active-site S-methylcysteine intermediate is Cys332.

It belongs to the radical SAM superfamily. RlmN family. Requires [4Fe-4S] cluster as cofactor.

It is found in the cytoplasm. It carries out the reaction adenosine(2503) in 23S rRNA + 2 reduced [2Fe-2S]-[ferredoxin] + 2 S-adenosyl-L-methionine = 2-methyladenosine(2503) in 23S rRNA + 5'-deoxyadenosine + L-methionine + 2 oxidized [2Fe-2S]-[ferredoxin] + S-adenosyl-L-homocysteine. The catalysed reaction is adenosine(37) in tRNA + 2 reduced [2Fe-2S]-[ferredoxin] + 2 S-adenosyl-L-methionine = 2-methyladenosine(37) in tRNA + 5'-deoxyadenosine + L-methionine + 2 oxidized [2Fe-2S]-[ferredoxin] + S-adenosyl-L-homocysteine. Functionally, specifically methylates position 2 of adenine 2503 in 23S rRNA and position 2 of adenine 37 in tRNAs. The sequence is that of Probable dual-specificity RNA methyltransferase RlmN from Synechocystis sp. (strain ATCC 27184 / PCC 6803 / Kazusa).